A 159-amino-acid chain; its full sequence is Ribosomal RNA large subunit methyltransferase H (159 aa).

S-adenosyl-L-methionine-binding positions include Leu-76, Gly-108, and 127–132 (FSKMTF).

It belongs to the RNA methyltransferase RlmH family. In terms of assembly, homodimer.

It is found in the cytoplasm. It catalyses the reaction pseudouridine(1915) in 23S rRNA + S-adenosyl-L-methionine = N(3)-methylpseudouridine(1915) in 23S rRNA + S-adenosyl-L-homocysteine + H(+). Functionally, specifically methylates the pseudouridine at position 1915 (m3Psi1915) in 23S rRNA. This Lachnospira eligens (strain ATCC 27750 / DSM 3376 / VPI C15-48 / C15-B4) (Eubacterium eligens) protein is Ribosomal RNA large subunit methyltransferase H.